Here is a 268-residue protein sequence, read N- to C-terminus: Membrane lipoprotein TpN32 (268 aa).

Residues 1-23 (MKGKTVSAALVGKLIALSVGVVA) form the signal peptide. The N-palmitoyl cysteine moiety is linked to residue Cys-24. Residue Cys-24 is the site of S-diacylglycerol cysteine attachment.

It belongs to the NlpA lipoprotein family.

The protein localises to the cell membrane. The protein is Membrane lipoprotein TpN32 (tpn32) of Treponema pallidum (strain Nichols).